A 434-amino-acid chain; its full sequence is NADH-quinone oxidoreductase subunit F 1 (434 aa).

54 to 63 (GRGGAGFPTG) provides a ligand contact to NAD(+). Residue 166–213 (GAGAYICGEETALLESLEGKKGQPRLKPPFPANMGLYGCPTTVNNVES) participates in FMN binding. [4Fe-4S] cluster is bound by residues C345, C348, C351, and C391.

The protein belongs to the complex I 51 kDa subunit family. FMN serves as cofactor. [4Fe-4S] cluster is required as a cofactor.

It carries out the reaction a quinone + NADH + 5 H(+)(in) = a quinol + NAD(+) + 4 H(+)(out). In terms of biological role, NDH-1 shuttles electrons from NADH, via FMN and iron-sulfur (Fe-S) centers, to quinones in the respiratory chain. The immediate electron acceptor for the enzyme in this species is believed to be ubiquinone. Couples the redox reaction to proton translocation (for every two electrons transferred, four hydrogen ions are translocated across the cytoplasmic membrane), and thus conserves the redox energy in a proton gradient. The chain is NADH-quinone oxidoreductase subunit F 1 (nuoF1) from Rhizobium meliloti (strain 1021) (Ensifer meliloti).